We begin with the raw amino-acid sequence, 162 residues long: MRNITNFLKTFLLWELLKGLKVTGKHFFTRKVTVQYPDEKTPISNRFRGLHALRRYENGEERCIACKLCEVVCPALAITINSTEREDGTRRTSSYEMDLFKCIFCGYCEESCPVDSIVETNILEYHFEERGENIMTKAKLLAIGDKYEAQIAADRLQDKDFR.

2 4Fe-4S ferredoxin-type domains span residues 54–83 and 93–122; these read RRYE…INST and SSYE…ETNI. The [4Fe-4S] cluster site is built by Cys-63, Cys-66, Cys-69, Cys-73, Cys-102, Cys-105, Cys-108, and Cys-112.

It belongs to the complex I 23 kDa subunit family. As to quaternary structure, NDH-1 is composed of 14 different subunits. Subunits NuoA, H, J, K, L, M, N constitute the membrane sector of the complex. It depends on [4Fe-4S] cluster as a cofactor.

It localises to the cell inner membrane. It carries out the reaction a quinone + NADH + 5 H(+)(in) = a quinol + NAD(+) + 4 H(+)(out). Functionally, NDH-1 shuttles electrons from NADH, via FMN and iron-sulfur (Fe-S) centers, to quinones in the respiratory chain. The immediate electron acceptor for the enzyme in this species is believed to be ubiquinone. Couples the redox reaction to proton translocation (for every two electrons transferred, four hydrogen ions are translocated across the cytoplasmic membrane), and thus conserves the redox energy in a proton gradient. The sequence is that of NADH-quinone oxidoreductase subunit I from Francisella tularensis subsp. tularensis (strain FSC 198).